The following is a 121-amino-acid chain: Splicing factor 3B subunit 6 (121 aa).

An interaction with pre-mRNA branch site region spans residues 12-25 (EVNRLLYVRNLPYK). An RRM domain is found at 15–90 (RLLYVRNLPY…RYLVVLYYQS (76 aa)).

The protein belongs to the SF3B6 family. Component of splicing factor SF3B complex. Component of the U11/U12 snRNPs that are part of the U12-type spliceosome.

It localises to the nucleus. Its function is as follows. Involved in pre-mRNA splicing as a component of the splicing factor SF3B complex. SF3B complex is required for 'A' complex assembly formed by the stable binding of U2 snRNP to the branchpoint sequence (BPS) in pre-mRNA. Directly contacts the pre-mRNA branch site adenosine for the first catalytic step of splicing. Enters the spliceosome and associates with the pre-mRNA branch site as part of the 17S U2 or, in the case of the minor spliceosome, as part of the 18S U11/U12 snRNP complex, and thus may facilitate the interaction of these snRNP with the branch sites of U2 and U12 respectively. The protein is Splicing factor 3B subunit 6 of Drosophila melanogaster (Fruit fly).